The chain runs to 336 residues: tRNA N6-adenosine threonylcarbamoyltransferase (336 aa).

Fe cation is bound by residues His114 and His118. Substrate is bound by residues 136 to 140 (LVSGG), Asp169, Gly182, Asp186, and Asn275. Asp302 provides a ligand contact to Fe cation.

It belongs to the KAE1 / TsaD family. Fe(2+) serves as cofactor.

Its subcellular location is the cytoplasm. The catalysed reaction is L-threonylcarbamoyladenylate + adenosine(37) in tRNA = N(6)-L-threonylcarbamoyladenosine(37) in tRNA + AMP + H(+). Its function is as follows. Required for the formation of a threonylcarbamoyl group on adenosine at position 37 (t(6)A37) in tRNAs that read codons beginning with adenine. Is involved in the transfer of the threonylcarbamoyl moiety of threonylcarbamoyl-AMP (TC-AMP) to the N6 group of A37, together with TsaE and TsaB. TsaD likely plays a direct catalytic role in this reaction. This chain is tRNA N6-adenosine threonylcarbamoyltransferase, found in Streptococcus agalactiae serotype V (strain ATCC BAA-611 / 2603 V/R).